A 230-amino-acid polypeptide reads, in one-letter code: Claudin-2 (230 aa).

Residues 1 to 7 are Cytoplasmic-facing; that stretch reads MASLGLQ. The chain crosses the membrane as a helical span at residues 8–28; the sequence is LVGYILGLLGLLGTLVAMLLP. At 29 to 81 the chain is on the extracellular side; sequence SWKTSSYVGASIVTAVGFSKGLWMECATHSTGITQCDIYSTLLGLPADIQAAQ. The cysteines at positions 54 and 64 are disulfide-linked. Residues 82–102 traverse the membrane as a helical segment; the sequence is AMMVTSSAISSLACIISVVGM. Residues 103–116 are Cytoplasmic-facing; that stretch reads RCTVFCQESRAKDR. A helical membrane pass occupies residues 117-137; sequence VAVAGGVFFILGGLLGFIPVA. Residues 138–162 lie on the Extracellular side of the membrane; it reads WNLHGILRDFYSPLVPDSMKFEIGE. Residues 163–183 form a helical membrane-spanning segment; sequence ALYLGIISSLFSLIAGIILCF. Topologically, residues 184–230 are cytoplasmic; the sequence is SCSSQRNRSNYYDAYQAQPLATRSSPRPGQPPKVKSEFNSYSLTGYV. Residues 205–230 are disordered; sequence TRSSPRPGQPPKVKSEFNSYSLTGYV. K218 participates in a covalent cross-link: Glycyl lysine isopeptide (Lys-Gly) (interchain with G-Cter in SUMO). Residues S219 and S223 each carry the phosphoserine modification. Polar residues predominate over residues 220–230; that stretch reads EFNSYSLTGYV. Residues 229 to 230 are interactions with TJP1, TJP2 and TJP3; sequence YV.

This sequence belongs to the claudin family. Can form homo- and heteropolymers with other claudins to mediate paracellular barrier and channel functions of tight junctions in response to physiological stimuli. Homopolymers interact with CLDN3, but not CLDN1, homopolymers. Directly interacts with TJP1/ZO-1, TJP2/ZO-2 and TJP3/ZO-3. Post-translationally, the disulfide bond is necessary for pore formation, but is not required for correct protein trafficking.

The protein resides in the cell junction. Its subcellular location is the tight junction. It is found in the cell membrane. It carries out the reaction Na(+)(in) = Na(+)(out). It catalyses the reaction K(+)(in) = K(+)(out). The catalysed reaction is Rb(+)(in) = Rb(+)(out). The enzyme catalyses Li(+)(in) = Li(+)(out). It carries out the reaction Cs(+)(in) = Cs(+)(out). It catalyses the reaction Ca(2+)(in) = Ca(2+)(out). The catalysed reaction is methylamine(out) = methylamine(in). The enzyme catalyses choline(out) = choline(in). It carries out the reaction H2O(in) = H2O(out). In terms of biological role, forms paracellular channels: polymerizes in tight junction strands with cation- and water-selective channels through the strands, conveying epithelial permeability in a process known as paracellular tight junction permeability. In intestinal epithelium, allows for sodium and water fluxes from the peritoneal side to the lumen of the intestine to regulate nutrient absorption and clear enteric pathogens as part of mucosal immune response. In kidney, allows passive sodium and calcium reabsorption across proximal tubules from the lumen back to the bloodstream. In the hepatobiliary tract, allows paracellular water and cation fluxes in the hepatic perivenous areas and biliary epithelium to generate bile flow and maintain osmotic gradients. The protein is Claudin-2 of Homo sapiens (Human).